The primary structure comprises 266 residues: Glucose 1-dehydrogenase (266 aa).

15–39 (LVTGASQGIGEATALRFAEEGAQVA) lines the NADP(+) pocket. Ser149 is a substrate binding site. Residue Tyr162 is the Proton acceptor of the active site.

It belongs to the short-chain dehydrogenases/reductases (SDR) family. In terms of assembly, homotetramer or homooctamer.

It carries out the reaction D-glucose + NADP(+) = D-glucono-1,5-lactone + NADPH + H(+). Its function is as follows. Oxidizes both D-glucose and D-mannose, but is 15 times more catalytically efficient with mannose. Strictly dependent on NADP. This chain is Glucose 1-dehydrogenase, found in Gluconobacter oxydans (strain 621H) (Gluconobacter suboxydans).